Reading from the N-terminus, the 1170-residue chain is Structural maintenance of chromosomes protein 2 (1170 aa).

32 to 39 (GLNGSGKS) serves as a coordination point for ATP. Residues 172–469 (KMFEDRREKA…DKLRARLVEY (298 aa)) are a coiled coil. The region spanning 523–641 (VHGVVGQLFQ…CEDPETAKKI (119 aa)) is the SMC hinge domain. Residues 678–1027 (VDIQKYNQIQ…ISKLNEYKRE (350 aa)) are a coiled coil.

It belongs to the SMC family. SMC2 subfamily. Forms a heterodimer with SMC4. Component of the condensin complex, which contains the SMC2 and SMC4 heterodimer, and three non SMC subunits that probably regulate the complex: BRN1, YCS4 and YCG1/YCS5.

The protein resides in the nucleus. Its subcellular location is the cytoplasm. It localises to the chromosome. Its function is as follows. Central component of the condensin complex, a complex required for conversion of interphase chromatin into mitotic-like condense chromosomes. The condensin complex probably introduces positive supercoils into relaxed DNA in the presence of type I topoisomerases and converts nicked DNA into positive knotted forms in the presence of type II topoisomerases. This chain is Structural maintenance of chromosomes protein 2 (SMC2), found in Saccharomyces cerevisiae (strain ATCC 204508 / S288c) (Baker's yeast).